Here is a 452-residue protein sequence, read N- to C-terminus: Transcription factor SMP1 (452 aa).

The MADS-box domain occupies 3–57 (RRKIEIEPIKDDRNRTVTFIKRKAGLFKKAHELSVLCQVDIAVIILGSNNTFYEY). A DNA-binding region (mef2-type) is located at residues 58 to 87 (SSVDMSNLLNVHQNNTDLPHNIIEPSDYGD). The disordered stretch occupies residues 97–142 (NERKRRRRRATVLQPASHSGSCTVSSQDSSSVQNNGNLSAPLASND). Positions 115-127 (SGSCTVSSQDSSS) are enriched in low complexity.

Belongs to the MEF2 family. In terms of assembly, can heterodimerize with RLM1. Interacts with HOG1. Phosphorylated by HOG1.

The protein resides in the nucleus. In terms of biological role, transcription factor that controls part of the HOG1-mediated osmostress responses. Binds to the DNA sequence 5'-ACTACTA[TA](4)TAG-3'. Does not appear to function in the MPK1 pathway. The chain is Transcription factor SMP1 (SMP1) from Saccharomyces cerevisiae (strain ATCC 204508 / S288c) (Baker's yeast).